The sequence spans 252 residues: uncharacterized protein (252 aa).

A helical membrane pass occupies residues 80–100 (LSVLVIGSTMFTHAGVLPVLA).

It is found in the host membrane. The protein localises to the virion. This is an uncharacterized protein from Acanthamoeba polyphaga mimivirus (APMV).